The chain runs to 358 residues: Cytoplasmic tRNA 2-thiolation protein 1 (358 aa).

It belongs to the TtcA family. CTU1/NCS6/ATPBD3 subfamily.

It is found in the cytoplasm. It functions in the pathway tRNA modification; 5-methoxycarbonylmethyl-2-thiouridine-tRNA biosynthesis. In terms of biological role, plays a central role in 2-thiolation of mcm(5)S(2)U at tRNA wobble positions of tRNA(Lys), tRNA(Glu) and tRNA(Gln). Directly binds tRNAs and probably acts by catalyzing adenylation of tRNAs, an intermediate required for 2-thiolation. It is unclear whether it acts as a sulfurtransferase that transfers sulfur from thiocarboxylated URM1 onto the uridine of tRNAs at wobble position. Prior mcm(5) tRNA modification by the elongator complex is required for 2-thiolation. May also be involved in protein urmylation. The polypeptide is Cytoplasmic tRNA 2-thiolation protein 1 (Candida glabrata (strain ATCC 2001 / BCRC 20586 / JCM 3761 / NBRC 0622 / NRRL Y-65 / CBS 138) (Yeast)).